The sequence spans 350 residues: Glycolate oxidase subunit GlcE (350 aa).

Positions 1 to 173 (MLRECDYSQA…TEISMKVLPR (173 aa)) constitute an FAD-binding PCMH-type domain.

In terms of assembly, the glycolate oxidase likely consists of three subunits, GlcD, GlcE and GlcF. FAD serves as cofactor.

The protein resides in the cell inner membrane. The enzyme catalyses glycolate + A = glyoxylate + AH2. It carries out the reaction (R)-lactate + A = pyruvate + AH2. Its activity is regulated as follows. In vitro the glycolate oxidase activity is inhibited by the sulfhydryl inhibitors CuSO4 and PCMB, by KCN, but not by the metal complexing agent EDTA. Functionally, component of a complex that catalyzes the oxidation of glycolate to glyoxylate. Is required for E.coli to grow on glycolate as a sole source of carbon. Is also able to oxidize D-lactate ((R)-lactate) with a similar rate. Does not link directly to O(2), and 2,6-dichloroindophenol (DCIP) and phenazine methosulfate (PMS) can act as artificial electron acceptors in vitro, but the physiological molecule that functions as a primary electron acceptor during glycolate oxidation is unknown. The protein is Glycolate oxidase subunit GlcE of Escherichia coli (strain K12).